We begin with the raw amino-acid sequence, 197 residues long: Guanylyl cyclase-activating protein 2 (197 aa).

Gly2 carries N-myristoyl glycine lipidation. 4 consecutive EF-hand domains span residues 15–50, 51–86, 87–122, and 138–173; these read DVAE…QDNQ, EAAD…VLRG, KLEH…IYNL, and SPEQ…DKWV. Ca(2+)-binding residues include Asp64, Asn66, Asp68, Thr70, Glu75, Asp100, Asp102, Asn104, Cys106, Glu111, Asp151, Asn153, Asp155, Gln157, and Glu162.

In terms of tissue distribution, low expression in retina.

Functionally, stimulates guanylyl cyclase 1 (GC1) and GC2 when free calcium ions concentration is low and inhibits guanylyl cyclases when free calcium ions concentration is elevated. This Ca(2+)-sensitive regulation of guanylyl cyclase (GC) is a key event in recovery of the dark state of rod photoreceptors following light exposure. The protein is Guanylyl cyclase-activating protein 2 (GUCA1B) of Lithobates pipiens (Northern leopard frog).